A 423-amino-acid chain; its full sequence is Imidazolonepropionase (423 aa).

Positions 78 and 80 each coordinate Fe(3+). The Zn(2+) site is built by histidine 78 and histidine 80. 4-imidazolone-5-propanoate is bound by residues arginine 87, tyrosine 150, and histidine 183. N-formimidoyl-L-glutamate is bound at residue tyrosine 150. Residue histidine 247 coordinates Fe(3+). A Zn(2+)-binding site is contributed by histidine 247. Glutamate 250 serves as a coordination point for 4-imidazolone-5-propanoate. Aspartate 322 provides a ligand contact to Fe(3+). Aspartate 322 lines the Zn(2+) pocket. N-formimidoyl-L-glutamate contacts are provided by asparagine 324 and glycine 326. Residue serine 327 coordinates 4-imidazolone-5-propanoate.

This sequence belongs to the metallo-dependent hydrolases superfamily. HutI family. Requires Zn(2+) as cofactor. Fe(3+) is required as a cofactor.

The protein resides in the cytoplasm. It catalyses the reaction 4-imidazolone-5-propanoate + H2O = N-formimidoyl-L-glutamate. It participates in amino-acid degradation; L-histidine degradation into L-glutamate; N-formimidoyl-L-glutamate from L-histidine: step 3/3. Its function is as follows. Catalyzes the hydrolytic cleavage of the carbon-nitrogen bond in imidazolone-5-propanoate to yield N-formimidoyl-L-glutamate. It is the third step in the universal histidine degradation pathway. This chain is Imidazolonepropionase, found in Bacillus cereus (strain ATCC 14579 / DSM 31 / CCUG 7414 / JCM 2152 / NBRC 15305 / NCIMB 9373 / NCTC 2599 / NRRL B-3711).